A 314-amino-acid chain; its full sequence is RNA 2'-O-methyltransferase FBLL1 (314 aa).

Over residues 1 to 59 (MKPAGGRGGWGWGGGKGGSKGGDTGSGTKGGFGARTRGSSGGGRGRGRGGGGGGGGGGG) the composition is skewed to gly residues. The tract at residues 1–82 (MKPAGGRGGW…RRKKGITVSV (82 aa)) is disordered. Residue Arg7 is modified to Omega-N-methylarginine. Positions 64–77 (RGGPGKNKNRRKKG) are enriched in basic residues. S-adenosyl-L-methionine contacts are provided by residues 166–167 (TT), 185–186 (EF), 210–211 (DA), and 230–233 (DVAQ).

This sequence belongs to the methyltransferase superfamily. Fibrillarin family. Component of a box C/D small nucleolar ribonucleoprotein (snoRNP) complex composed of FBLL1, SNU13/NHP2L1, NOP56 and NOP58 and a guide snoRNA which mediates 2'-hydroxyl ribose methylation in RNAs.

It localises to the nucleus. The protein resides in the nucleolus. The enzyme catalyses a ribonucleotide in RNA + S-adenosyl-L-methionine = a 2'-O-methylribonucleotide in RNA + S-adenosyl-L-homocysteine + H(+). Its function is as follows. S-adenosyl-L-methionine-dependent RNA methyltransferase that catalyzes 2'-hydroxyl ribose methylation in RNAs. Functions as part of box C/D small nucleolar ribonucleoprotein (snoRNP) complexes, where guide snoRNAs ensure methylation specificity through base pairing with RNA substrates. Exhibits broad substrate specificity, methylating multiple sites on ribosomal RNAs (rRNAs) and messenger RNAs (mRNAs) depending on the guide snoRNA incorporated in the complex. Specifically expressed in brain, it regulates the expression of GAP43 by stabilizing its mRNA through methylation and thereby plays an indirect role in neuronal differentiation. This Mus musculus (Mouse) protein is RNA 2'-O-methyltransferase FBLL1.